We begin with the raw amino-acid sequence, 519 residues long: Probable cytochrome P450 513D1 (519 aa).

The chain crosses the membrane as a helical span at residues 1–21; it reads MGISSIIIILFIIVLLKKLIK. Position 464 (cysteine 464) interacts with heme.

This sequence belongs to the cytochrome P450 family. It depends on heme as a cofactor.

It is found in the membrane. The protein is Probable cytochrome P450 513D1 (cyp513D1) of Dictyostelium discoideum (Social amoeba).